Here is a 306-residue protein sequence, read N- to C-terminus: tRNA dimethylallyltransferase (306 aa).

Residue 12–19 (GPTGTKKS) coordinates ATP.

It belongs to the IPP transferase family. Monomer. The cofactor is Mg(2+).

It carries out the reaction adenosine(37) in tRNA + dimethylallyl diphosphate = N(6)-dimethylallyladenosine(37) in tRNA + diphosphate. Its function is as follows. Catalyzes the transfer of a dimethylallyl group onto the adenine at position 37 in tRNAs that read codons beginning with uridine, leading to the formation of N6-(dimethylallyl)adenosine (i(6)A). The sequence is that of tRNA dimethylallyltransferase from Mycoplasmoides gallisepticum (strain R(low / passage 15 / clone 2)) (Mycoplasma gallisepticum).